Consider the following 212-residue polypeptide: uncharacterized protein (212 aa).

Residues 29–146 (KGKAGEKLVK…AAFHPKCSLK (118 aa)) enclose the NERD domain.

This is an uncharacterized protein from Bacillus anthracis.